Consider the following 229-residue polypeptide: uncharacterized protein (229 aa).

It to M.pneumoniae MPN_376 central region.

This is an uncharacterized protein from Mycoplasma pneumoniae (strain ATCC 29342 / M129 / Subtype 1) (Mycoplasmoides pneumoniae).